A 377-amino-acid polypeptide reads, in one-letter code: MAVNVNTNVSAMTAQRYLTSATNAQQSSMERLSSGYKINSAKDDAAGLQISNRLNVQSRGLGVAVRNANDGISMAQTAEGAMKETTNILQRMRDLSLQSANGSNSKADRVAIQEEITALNDELNRVAETTSFGGNKLLNGTFATKSFQIGADNGEAVMLNIKDMRSDNALMGGKTYQAANGKDKNWGVEAGKTDLTITLKDKREGDVTISINAKEGDDIEELATYINGQTDMIKASVDEEGKLQLFTDNNRIDGAATFGGALAGELGIGAAQDVTVDTLDVTTVGGAQESVAIVDAALKYVDSHRAELGAFQNRFNHAINNLDNINENVNASKSRIKDTDFAKETTALTKAQILSQASSSVLAQAKQAPNSALALLG.

Coiled-coil stretches lie at residues 103 to 129 (SNSKADRVAIQEEITALNDELNRVAET) and 301 to 340 (VDSHRAELGAFQNRFNHAINNLDNINENVNASKSRIKDTD).

Belongs to the bacterial flagellin family. As to quaternary structure, heteromer of multiple flagellin subunits including FlaA, FlaB, FlaC, FlaD and FlaE.

It localises to the secreted. Its subcellular location is the bacterial flagellum. Flagellin is the subunit protein which polymerizes to form the filaments of bacterial flagella. FlaC is not essential for flagellar synthesis and motility. This Vibrio cholerae serotype O1 (strain ATCC 39541 / Classical Ogawa 395 / O395) protein is Flagellin C (flaC).